The following is a 708-amino-acid chain: MSQDKAFTMEVRDDGVAVITIDVPGESMNTLKDSFAEEVGSLMNRLESDDSVKGVVFISGKPGSFIAGADINMIDGCENAVDAESLARKGQAMFDRIEQLNVPVVAAINGACLGGGLELAMACHVRVCTDNSKTALGLPEVKLGLLPGSGGTQRLPELVGVQQGLTMILTGKELRAKQALKAGLVTEVVPQSILLDVAVEHALKRKPKSTKPPLKGISKVLEATKFGRDIIFKKASEQAQKKAQGNYPAIDKIIQTVREGVERGREAGLDKEARSFGELAMTPESYQLRQIFFATTEMKKETGADGVKPDSVKRVGVLGGGLMGGGIAYVTAAKAGIPARIKDIAEDGIRHALHYSYERLDKKVKRRHMRRAELEKTMLMLSGSLDYSGFERTDVVIEAVFEDLNLKQKMVADVEEHADESTIFATNTSSLPITQIAAKAKRPEQVIGLHYFSPVDKMPLAEIITHPGTSDKTIATTVSLAKKQGKTPIVVKDGAGFYVNRILAPYMNEAARLLLAGEPIEHIDKTLVKFGFPVGPITLLDEVGIDVAAKVAPVLVKELGDRFEAPEAFEKLIDDDRKGKKNQKGFYQYGKSVKGKPVDTSVYSLLDIDPNESKSADEIIDICLLPMLNEAAYCLQEEIIRSPRDGDIGAIFGIGFPPFLGGPFRYMDSQGLETIVNKLEKLAAERGERYTPAPLLKQMLENGWNFYQ.

The tract at residues 1-190 (MSQDKAFTME…KAGLVTEVVP (190 aa)) is enoyl-CoA hydratase. The segment at 310–708 (DSVKRVGVLG…MLENGWNFYQ (399 aa)) is 3-hydroxyacyl-CoA dehydrogenase.

In the N-terminal section; belongs to the enoyl-CoA hydratase/isomerase family. This sequence in the central section; belongs to the 3-hydroxyacyl-CoA dehydrogenase family. As to quaternary structure, heterotetramer of two alpha chains (FadJ) and two beta chains (FadI).

The protein localises to the cytoplasm. The enzyme catalyses a (3S)-3-hydroxyacyl-CoA = a (2E)-enoyl-CoA + H2O. It carries out the reaction a 4-saturated-(3S)-3-hydroxyacyl-CoA = a (3E)-enoyl-CoA + H2O. It catalyses the reaction a (3S)-3-hydroxyacyl-CoA + NAD(+) = a 3-oxoacyl-CoA + NADH + H(+). The catalysed reaction is (3S)-3-hydroxybutanoyl-CoA = (3R)-3-hydroxybutanoyl-CoA. The protein operates within lipid metabolism; fatty acid beta-oxidation. In terms of biological role, catalyzes the formation of a hydroxyacyl-CoA by addition of water on enoyl-CoA. Also exhibits 3-hydroxyacyl-CoA epimerase and 3-hydroxyacyl-CoA dehydrogenase activities. This is Fatty acid oxidation complex subunit alpha from Idiomarina loihiensis (strain ATCC BAA-735 / DSM 15497 / L2-TR).